We begin with the raw amino-acid sequence, 492 residues long: Pyrin and HIN domain-containing protein 1 (492 aa).

The region spanning 1–88 (MANNYKKIVL…AETLKREKLK (88 aa)) is the Pyrin domain. Disordered stretches follow at residues 106–199 (KTKQ…KPLA) and 400–492 (KNTN…PAVP). Over residues 142-159 (PSEEETGTKRSKMSKEQT) the composition is skewed to basic and acidic residues. Residues 160–173 (RPSCSAGASTSTAM) are compositionally biased toward polar residues. The span at 181 to 194 (TSSSAPPNTSSTES) shows a compositional bias: low complexity. An HIN-200 domain is found at 199-399 (ANRHATASKN…SEMHSFIQIQ (201 aa)). 2 stretches are compositionally biased toward polar residues: residues 416–432 (QEQS…TTLP) and 460–492 (GAQS…PAVP).

The protein belongs to the HIN-200 family. Interacts with MDM2. As to expression, expressed in spleen, lymph node and peripheral blood leukocytes, and at lower levels in thymus, bone marrow and fetal liver. Down-regulated in breast tumors.

It localises to the nucleus. It is found in the nucleoplasm. The protein resides in the nucleus speckle. Functionally, major mediator of the tumor suppressor activity of IFN in breast cancer cells. Promotes ubiquitination and subsequent degradation of MDM2, which leads to p53/TP53 stabilization. Promotes ubiquitination and subsequent degradation of HDAC1, which in turn enhances maspin expression, and impairs invasive activity of cancer cells. The chain is Pyrin and HIN domain-containing protein 1 (PYHIN1) from Homo sapiens (Human).